Consider the following 264-residue polypeptide: Phosphonoacetaldehyde hydrolase (264 aa).

The active-site Nucleophile is Asp9. Mg(2+) contacts are provided by Asp9 and Ala11. Lys50 functions as the Schiff-base intermediate with substrate in the catalytic mechanism. Mg(2+) is bound at residue Asp183.

Belongs to the HAD-like hydrolase superfamily. PhnX family. In terms of assembly, homodimer. The cofactor is Mg(2+).

It catalyses the reaction phosphonoacetaldehyde + H2O = acetaldehyde + phosphate + H(+). Its function is as follows. Involved in phosphonate degradation. The sequence is that of Phosphonoacetaldehyde hydrolase from Bacillus mycoides (strain KBAB4) (Bacillus weihenstephanensis).